The primary structure comprises 349 residues: Protein-glutamate methylesterase/protein-glutamine glutaminase (349 aa).

Positions 5–122 (RVLCVDDSAL…REGMLAYSEL (118 aa)) constitute a Response regulatory domain. D56 is subject to 4-aspartylphosphate. The 193-residue stretch at 152–344 (LLSSEKLIAI…QRMLAQISSG (193 aa)) folds into the CheB-type methylesterase domain. Catalysis depends on residues S164, H190, and D286.

The protein belongs to the CheB family. In terms of processing, phosphorylated by CheA. Phosphorylation of the N-terminal regulatory domain activates the methylesterase activity.

It is found in the cytoplasm. The catalysed reaction is [protein]-L-glutamate 5-O-methyl ester + H2O = L-glutamyl-[protein] + methanol + H(+). It carries out the reaction L-glutaminyl-[protein] + H2O = L-glutamyl-[protein] + NH4(+). In terms of biological role, involved in chemotaxis. Part of a chemotaxis signal transduction system that modulates chemotaxis in response to various stimuli. Catalyzes the demethylation of specific methylglutamate residues introduced into the chemoreceptors (methyl-accepting chemotaxis proteins or MCP) by CheR. Also mediates the irreversible deamidation of specific glutamine residues to glutamic acid. This is Protein-glutamate methylesterase/protein-glutamine glutaminase from Yersinia pestis bv. Antiqua (strain Antiqua).